The primary structure comprises 126 residues: Small ribosomal subunit protein bS6 (126 aa).

The interval 99–126 is disordered; the sequence is PLPAPRVVPGTEAPEPAQAAETPEPEAS. Residues 107 to 120 show a composition bias toward low complexity; sequence PGTEAPEPAQAAET.

Belongs to the bacterial ribosomal protein bS6 family.

Binds together with bS18 to 16S ribosomal RNA. The protein is Small ribosomal subunit protein bS6 of Synechococcus sp. (strain CC9902).